Here is a 1335-residue protein sequence, read N- to C-terminus: Bifunctional autolysin (1335 aa).

A signal peptide spans 1–29 (MAKKFNYKLPSMVALTLFGTAFTAHQANA). 3 disordered regions span residues 51 to 88 (QAEK…QSTT), 100 to 262 (NEIS…KYKE), and 514 to 535 (WGTT…NNKL). Composition is skewed to polar residues over residues 58-88 (EVTQ…QSTT), 100-127 (NEIS…VTKN), 143-155 (TDTN…QSVA), 176-223 (TASQ…NASG), and 244-258 (SLNN…TTSY). The N-acetylmuramoyl-L-alanine amidase stretch occupies residues 303–863 (VSSQKTSSLP…LSTQSTPAPK (561 aa)). A compositionally biased stretch (low complexity) spans 515-531 (GTTSTKPSQPSKPSGGT). 7 consecutive GW domains span residues 533–610 (NKLT…YNTA), 612–686 (APVK…TASK), 700–774 (TVTN…YNTA), 776–850 (SPVK…APSK), 868–943 (STQT…TQNI), 945–1020 (KQTQ…QNST), and 1023–1096 (QSTP…KEKI). Positions 864-1335 (QVKPSTQTVN…GKYFEIPIYK (472 aa)) are endo-beta-N-acetylglucosaminidase.

It in the N-terminal section; belongs to the N-acetylmuramoyl-L-alanine amidase 2 family. This sequence in the C-terminal section; belongs to the glycosyl hydrolase 73 family. As to quaternary structure, oligomer; forms a ring structure at the cell surface which is important for efficient partitioning of daughter cells after cell division. In terms of processing, undergoes proteolytic processing to generate the two extracellular lytic enzymes, probably at the septal region on the cell surface.

The protein localises to the secreted. It catalyses the reaction Hydrolyzes the link between N-acetylmuramoyl residues and L-amino acid residues in certain cell-wall glycopeptides.. The enzyme catalyses an N(4)-(oligosaccharide-(1-&gt;3)-[oligosaccharide-(1-&gt;6)]-beta-D-Man-(1-&gt;4)-beta-D-GlcNAc-(1-&gt;4)-alpha-D-GlcNAc)-L-asparaginyl-[protein] + H2O = an oligosaccharide-(1-&gt;3)-[oligosaccharide-(1-&gt;6)]-beta-D-Man-(1-&gt;4)-D-GlcNAc + N(4)-(N-acetyl-beta-D-glucosaminyl)-L-asparaginyl-[protein]. In terms of biological role, endohydrolysis of the di-N-acetylchitobiosyl unit in high-mannose glycopeptides and glycoproteins containing the -[(Man)5(GlcNAc)2]-Asn structure. One N-acetyl-D-glucosamine residue remains attached to the protein; the rest of the oligosaccharide is released intact. Cleaves the peptidoglycan connecting the daughter cells at the end of the cell division cycle, resulting in the separation of the two newly divided cells. Acts as an autolysin in penicillin-induced lysis. This chain is Bifunctional autolysin (atl), found in Staphylococcus epidermidis (strain ATCC 12228 / FDA PCI 1200).